A 584-amino-acid chain; its full sequence is Chaperonin GroEL 1 (584 aa).

Residues 29-32 (TIGP), 86-90 (DGTTT), glycine 413, and aspartate 492 contribute to the ATP site. Residues 523 to 542 (EPEAAAPGGPGGDPMGGMGG) form a disordered region. Residues 530–542 (GGPGGDPMGGMGG) show a composition bias toward gly residues.

This sequence belongs to the chaperonin (HSP60) family. Forms a cylinder of 14 subunits composed of two heptameric rings stacked back-to-back. Interacts with the co-chaperonin GroES.

The protein localises to the cytoplasm. The enzyme catalyses ATP + H2O + a folded polypeptide = ADP + phosphate + an unfolded polypeptide.. In terms of biological role, together with its co-chaperonin GroES, plays an essential role in assisting protein folding. The GroEL-GroES system forms a nano-cage that allows encapsulation of the non-native substrate proteins and provides a physical environment optimized to promote and accelerate protein folding. This chain is Chaperonin GroEL 1, found in Prochlorococcus marinus (strain MIT 9312).